Here is a 314-residue protein sequence, read N- to C-terminus: Ribonuclease Z (314 aa).

His62, His64, Asp66, His67, His144, Asp215, and His273 together coordinate Zn(2+). Residue Asp66 is the Proton acceptor of the active site.

Belongs to the RNase Z family. Homodimer. It depends on Zn(2+) as a cofactor.

The catalysed reaction is Endonucleolytic cleavage of RNA, removing extra 3' nucleotides from tRNA precursor, generating 3' termini of tRNAs. A 3'-hydroxy group is left at the tRNA terminus and a 5'-phosphoryl group is left at the trailer molecule.. Functionally, zinc phosphodiesterase, which displays some tRNA 3'-processing endonuclease activity. Probably involved in tRNA maturation, by removing a 3'-trailer from precursor tRNA. In Prochlorococcus marinus (strain NATL2A), this protein is Ribonuclease Z.